A 296-amino-acid chain; its full sequence is tRNA dimethylallyltransferase (296 aa).

11-18 contacts ATP; sequence GPTAVGKT. 13–18 contacts substrate; that stretch reads TAVGKT. The segment at 36-39 is interaction with substrate tRNA; it reads DSQQ.

Belongs to the IPP transferase family. As to quaternary structure, monomer. Requires Mg(2+) as cofactor.

The catalysed reaction is adenosine(37) in tRNA + dimethylallyl diphosphate = N(6)-dimethylallyladenosine(37) in tRNA + diphosphate. Functionally, catalyzes the transfer of a dimethylallyl group onto the adenine at position 37 in tRNAs that read codons beginning with uridine, leading to the formation of N6-(dimethylallyl)adenosine (i(6)A). In Streptococcus equi subsp. equi (strain 4047), this protein is tRNA dimethylallyltransferase.